The sequence spans 200 residues: Dephospho-CoA kinase (200 aa).

The region spanning 3–200 (IIGLTGGIGS…LWQRFATQVE (198 aa)) is the DPCK domain. 11-16 (GSGKST) lines the ATP pocket.

It belongs to the CoaE family.

Its subcellular location is the cytoplasm. It catalyses the reaction 3'-dephospho-CoA + ATP = ADP + CoA + H(+). Its pathway is cofactor biosynthesis; coenzyme A biosynthesis; CoA from (R)-pantothenate: step 5/5. In terms of biological role, catalyzes the phosphorylation of the 3'-hydroxyl group of dephosphocoenzyme A to form coenzyme A. This chain is Dephospho-CoA kinase, found in Corynebacterium diphtheriae (strain ATCC 700971 / NCTC 13129 / Biotype gravis).